An 860-amino-acid polypeptide reads, in one-letter code: DNA mismatch repair protein MutS (860 aa).

An ATP-binding site is contributed by 608–615 (GPNMAGKS).

The protein belongs to the DNA mismatch repair MutS family.

Its function is as follows. This protein is involved in the repair of mismatches in DNA. It is possible that it carries out the mismatch recognition step. This protein has a weak ATPase activity. The chain is DNA mismatch repair protein MutS from Borrelia turicatae (strain 91E135).